Here is a 353-residue protein sequence, read N- to C-terminus: O-antigen biosynthesis glycosyltransferase WclY (353 aa).

A helical transmembrane segment spans residues 116–136 (SLIGGLLWCSIWLFFDKLVIL). Residues Asn190 and Glu271 each contribute to the UDP site. The E(x7)E motif lies at 263–271 (EGFGLTVLE).

Belongs to the glycosyltransferase group 1 family. Glycosyltransferase 4 subfamily.

It is found in the membrane. It participates in bacterial outer membrane biogenesis; LPS O-antigen biosynthesis. Activated by 5mM MnCl(2) and MgCl(2). No significant effect on activity by 5 mM ethylenediaminetetraacetic acid (EDTA), 0.125-0.5% Triton X-100 or dithiothreitol (DTT). Inhibited by 5 mM Zn-acetate. In terms of biological role, involved in the assembly of the O-repeating unit during O-antigen biosynthesis. Glucosyltransferase accountable for the alpha-D-Glc-1,4-beta-D-Gal linkage within the O-antigen. Transfers alpha-1,4-Glc to the Gal moiety of a specific Gal-beta1-3GalNAc-alpha-OPO3-PO3-phenoxyundecyl (Gal-beta1-3GalNAc-PP-PhU) synthetic natural acceptor substrate analog. Requires both Gal-beta1-3GalNAc-alpha and the diphosphate moiety in the acceptor. Not active with GalNAc-PP-PhU, GlcNAc-PP-PhU, Gal-beta1-3GalNAc-alpha-O-benzyl, D-Rha-alpha1-3GlcNAc-alpha-PP-PhU or D-Man-alpha1-3Man-alpha-5-benzamidopentyl (BAP), nor with glycopeptides TTTVTP (Gal-beta1-3GalNAc-alpha-)TPTG or TT (Gal-beta1-3GalNAc-alpha-)TVTPTPTG as acceptor substrates. Has a broad nucleotide sugar donor substrate specificity with ADP-Glc, TDP-Glc and UDP-Glc as superior donors. Gal, GlcNAc, and GalNAc residues are transferred from UDP-sugars, but with low activity. UDP-Xyl, UDP-GlcA, GDP-Fuc or GDP-K-Rha do not act as donors. The chain is O-antigen biosynthesis glycosyltransferase WclY from Escherichia coli.